Consider the following 308-residue polypeptide: Uricase-2 (308 aa).

Catalysis depends on charge relay system residues Lys17 and Thr63. Residues Thr63, Asp64, Phe165, Arg182, Val237, Gln238, and Asn264 each coordinate urate. His266 acts as the Charge relay system in catalysis. A Microbody targeting signal motif is present at residues 306–308 (SKL).

This sequence belongs to the uricase family. Homotetramer. Expressed predominantly in the uninfected cells of the central tissue of the root nodule. Also expressed in the nodule parenchyma cells and vascular tissue, in the roots, stems and leaves of uninfected adult plants, and in the cotyledons, roots and hypocotyls of developing seedlings. Localized to the metaxylem parenchyma cells and phloem fibers of developing roots.

It is found in the peroxisome. It carries out the reaction urate + O2 + H2O = 5-hydroxyisourate + H2O2. It functions in the pathway purine metabolism; urate degradation; (S)-allantoin from urate: step 1/3. Its function is as follows. Catalyzes the oxidation of uric acid to 5-hydroxyisourate, which is further processed to form (S)-allantoin. The polypeptide is Uricase-2 (URIII) (Phaseolus vulgaris (Kidney bean)).